Consider the following 130-residue polypeptide: Small ribosomal subunit protein uS9 (130 aa).

The segment at R106–R130 is disordered. Over residues V111–R130 the composition is skewed to basic residues.

It belongs to the universal ribosomal protein uS9 family.

This chain is Small ribosomal subunit protein uS9, found in Streptococcus pneumoniae serotype 2 (strain D39 / NCTC 7466).